The following is a 526-amino-acid chain: MDSKEMVVEEIMRIHRSLPLRPEIDDVETATSLIQNVEKEDRNRLEAIDKLVKTSSSEVPLELFNVFKEMKKSLVRFQSTEQTREATKILDLESVHVVFDELIQRASFCIASPNSTTALPRSVPVPAPVVSSDEIPFKSKEIISRDDTFVKKAKSSFYSDGLLAPSKPQVLDSTLHQAKNVAGNDGEKLSLIKLASLIEVSAKKATQELNLQHRLMDQLEWLPDSLGKLSSLVRLDLSENCIMVLPATIGGLISLTRLDLHSNRIGQLPESIGDLLNLVNLNLSGNQLSSLPSSFNRLIHLEELDLSSNSLSILPESIGSLVSLKKLDVETNNIEEIPHSISGCSSMEELRADYNRLKALPEAVGKLSTLEILTVRYNNIRQLPTTMSSMANLKELDVSFNELESVPESLCYAKTLVKLNIGNNFANLRSLPGLIGNLEKLEELDMSNNQIRFLPYSFKTLSNLRVLQTEQNPLEELPRDITEKGAQAVVQYMNDLVEARNTKSQRTKPKKSWVNSICFFCKSSTN.

LRR repeat units follow at residues 229–252 (LSSL…IGGL), 253–275 (ISLT…IGDL), 276–297 (LNLV…SFNR), 298–321 (LIHL…IGSL), 323–344 (SLKK…ISGC), 346–367 (SMEE…VGKL), 368–390 (STLE…MSSM), 391–414 (ANLK…CYAK), 416–437 (LVKL…LIGN), 438–463 (LEKL…TLSN), and 465–484 (RVLQ…ITEK). Positions 485–492 (GAQAVVQY) match the GVYW; degenerate motif.

Belongs to the SHOC2 family. As to expression, widely expressed but preferentially in roots.

Functionally, leucine-rich repeat protein that likely mediates protein interactions, possibly in the context of signal transduction. The protein is Plant intracellular Ras-group-related LRR protein 5 (PIRL5) of Arabidopsis thaliana (Mouse-ear cress).